The primary structure comprises 48 residues: U-actitoxin-Cgg3 (48 aa).

Intrachain disulfides connect C5–C41, C7–C33, and C23–C42. S46 carries the post-translational modification Serine amide. The propeptide at 47 to 48 (GR) is removed in mature form.

It belongs to the sea anemone type 3 (BDS) potassium channel toxin family.

It localises to the secreted. Neurotoxin that induces paralysis when injected into crabs. May function in antimicrobial activity as it displays inhibitory activity towards the B.licheniformis enzyme subtilisin A (SUBTA) and the recombinant S.maltophilia protease 1 (rStmPr1) enzyme. Also displays inhibitory activity against various proteases including the porcine pancreatic elastase (PPE) and proteinase K (PK). In Condylactis gigantea (Giant Caribbean anemone), this protein is U-actitoxin-Cgg3.